Consider the following 307-residue polypeptide: MDEWINYDQFDRQTWHSFFPSEITFLTQENLDEIKSLNDQISLRDVQDIYLPLIKLIQLQYQNYQQMQLQKMTFLRKSSRRIPYIIGIAGSVAVGKSTTARLLQILLKRLMPDRRIEMITTDGFLYPNAELKRRGIMARKGFPESYDMDRLLTFMNDVNAGEDQVTAPTYSHSVYDVMEDHPQTIYKPDILIVEGINVLQLPTTQRLFVSDFFDFSVYVDADASLVEKWYLERFGMLLDTAFQDPTNYYYPYAQGDRAEAFKMAKQVWKDVDLPNLNDYILPTRTRADVILHKTEHHYIDRVYLRED.

90-97 (GSVAVGKS) serves as a coordination point for ATP.

Belongs to the prokaryotic pantothenate kinase family.

Its subcellular location is the cytoplasm. The catalysed reaction is (R)-pantothenate + ATP = (R)-4'-phosphopantothenate + ADP + H(+). The protein operates within cofactor biosynthesis; coenzyme A biosynthesis; CoA from (R)-pantothenate: step 1/5. This is Pantothenate kinase from Limosilactobacillus fermentum (strain NBRC 3956 / LMG 18251) (Lactobacillus fermentum).